The primary structure comprises 263 residues: Endonuclease 8 (263 aa).

The active-site Schiff-base intermediate with DNA is Pro-2. Glu-3 (proton donor) is an active-site residue. Residue Lys-53 is the Proton donor; for beta-elimination activity of the active site. Gln-70, Arg-125, and Asn-169 together coordinate DNA. Residues 229 to 263 (KVFHRDGEPCERCGSIIEKTTLSSRPFYWCPGCQH) form an FPG-type zinc finger. Arg-253 functions as the Proton donor; for delta-elimination activity in the catalytic mechanism.

The protein belongs to the FPG family. Zn(2+) is required as a cofactor.

The catalysed reaction is 2'-deoxyribonucleotide-(2'-deoxyribose 5'-phosphate)-2'-deoxyribonucleotide-DNA = a 3'-end 2'-deoxyribonucleotide-(2,3-dehydro-2,3-deoxyribose 5'-phosphate)-DNA + a 5'-end 5'-phospho-2'-deoxyribonucleoside-DNA + H(+). In terms of biological role, involved in base excision repair of DNA damaged by oxidation or by mutagenic agents. Acts as a DNA glycosylase that recognizes and removes damaged bases. Has a preference for oxidized pyrimidines, such as thymine glycol, 5,6-dihydrouracil and 5,6-dihydrothymine. Has AP (apurinic/apyrimidinic) lyase activity and introduces nicks in the DNA strand. Cleaves the DNA backbone by beta-delta elimination to generate a single-strand break at the site of the removed base with both 3'- and 5'-phosphates. The protein is Endonuclease 8 of Shigella sonnei (strain Ss046).